Reading from the N-terminus, the 233-residue chain is NAD-dependent protein deacylase (233 aa).

One can recognise a Deacetylase sirtuin-type domain in the interval 1–230; that stretch reads MKNIMILSGA…ALDIENFMKD (230 aa). NAD(+) is bound at residue 9-28; the sequence is GAGLSAPSGLKTFRDNDGLW. Residues Tyr-53 and Arg-56 each coordinate substrate. An NAD(+)-binding site is contributed by 88 to 91; it reads QNVD. The active-site Proton acceptor is the His-106. Positions 114, 117, 133, and 136 each coordinate Zn(2+). Residues 172-174 and 200-202 each bind NAD(+); these read GTS and NLE.

The protein belongs to the sirtuin family. Class III subfamily. Requires Zn(2+) as cofactor.

The protein resides in the cytoplasm. It carries out the reaction N(6)-acetyl-L-lysyl-[protein] + NAD(+) + H2O = 2''-O-acetyl-ADP-D-ribose + nicotinamide + L-lysyl-[protein]. It catalyses the reaction N(6)-succinyl-L-lysyl-[protein] + NAD(+) + H2O = 2''-O-succinyl-ADP-D-ribose + nicotinamide + L-lysyl-[protein]. NAD-dependent lysine deacetylase and desuccinylase that specifically removes acetyl and succinyl groups on target proteins. Modulates the activities of several proteins which are inactive in their acylated form. This is NAD-dependent protein deacylase from Campylobacter jejuni subsp. jejuni serotype O:2 (strain ATCC 700819 / NCTC 11168).